Reading from the N-terminus, the 556-residue chain is MARTTSQLYDAVPIQSSVVLCSCPSPSMVRTQTESSTPPGIPGGSRQGPAMDGTAAEPRPGAGSLQHAQPPPQPRKKRPEDFKFGKILGEGSFSTVVLARELATSREYAIKILEKRHIIKENKVPYVTRERDVMSRLDHPFFVKLYFTFQDDEKLYFGLSYAKNGELLKYIRKIGSFDETCTRFYTAEIVSALEYLHGKGIIHRDLKPENILLNEDMHIQITDFGTAKVLSPESKQARANSFVGTAQYVSPELLTEKSACKSSDLWALGCIIYQLVAGLPPFRAGNEYLIFQKIIKLEYDFPEKFFPKARDLVEKLLVLDATKRLGCEEMEGYGPLKAHPFFESVTWENLHQQTPPKLTAYLPAMSEDDEDCYGNYDNLLSQFGCMQVSSSSSSHSLSASDTGLPQRSGSNIEQYIHDLDSNSFELDLQFSEDEKRLLLEKQAGGNPWHQFVENNLILKMGPVDKRKGLFARRRQLLLTEGPHLYYVDPVNKVLKGEIPWSQELRPEAKNFKTFFVHTPNRTYYLMDPSGNAHKWCRKIQEVWRQRYQSHPDAAVQ.

Tyr-9 carries the post-translational modification Phosphotyrosine; by SRC and INSR. Ser-25 carries the post-translational modification Phosphoserine. The tract at residues 26–80 is disordered; the sequence is PSMVRTQTESSTPPGIPGGSRQGPAMDGTAAEPRPGAGSLQHAQPPPQPRKKRPE. Positions 28–38 are enriched in polar residues; it reads MVRTQTESSTP. A Protein kinase domain is found at 82–342; the sequence is FKFGKILGEG…YGPLKAHPFF (261 aa). ATP is bound by residues 92–94 and Lys-111; that span reads SFS. The segment at 113 to 157 is PIF-pocket; the sequence is LEKRHIIKENKVPYVTRERDVMSRLDHPFFVKLYFTFQDDEKLYF. ATP is bound by residues 160-162 and Glu-166; that span reads SYA. Asp-205 (proton acceptor) is an active-site residue. ATP contacts are provided by Glu-209 and Asp-223. Ser-241 is modified (phosphoserine; by autocatalysis). Lys-304 is subject to N6-acetyllysine. At Thr-354 the chain carries Phosphothreonine; by MELK. A phosphotyrosine; by SRC and INSR mark is found at Tyr-373 and Tyr-376. At Ser-393 the chain carries Phosphoserine. Ser-394 carries the phosphoserine; by MAP3K5 modification. Residue Ser-396 is modified to Phosphoserine. Ser-398 is subject to Phosphoserine; by MAP3K5. Phosphoserine is present on Ser-410. The 92-residue stretch at 459-550 folds into the PH domain; that stretch reads KMGPVDKRKG…EVWRQRYQSH (92 aa). Position 501 is a phosphoserine; by PKC/PRKCQ (Ser-501). Phosphothreonine; by autocatalysis is present on Thr-513. Phosphoserine; by PKC/PRKCQ is present on Ser-529.

It belongs to the protein kinase superfamily. AGC Ser/Thr protein kinase family. PDPK1 subfamily. As to quaternary structure, homodimer in its autoinhibited state. Active as monomer. Interacts with NPRL2, PPARG, PAK1, PTK2B, GRB14, PKN1 (via C-terminus), STRAP and IKKB. The Tyr-9 phosphorylated form interacts with SRC, RASA1 and CRK (via their SH2 domains). Interacts with SGK3 in a phosphorylation-dependent manner. The tyrosine-phosphorylated form interacts with PTPN6. The Ser-241 phosphorylated form interacts with YWHAH and YWHAQ. Binds INSR in response to insulin. Interacts (via PH domain) with SMAD3, SMAD4 and SMAD7. Interacts with PKN2; the interaction stimulates PDPK1 autophosphorylation, its PI(3,4,5)P3-dependent kinase activity toward 'Ser-473' of AKT1 but also activates its kinase activity toward PRKCD and PRKCZ. Phosphorylation on Ser-241 in the activation loop is required for full activity. PDPK1 itself can autophosphorylate Ser-241, leading to its own activation. Autophosphorylation is inhibited by the apoptotic C-terminus cleavage product of PKN2. Tyr-9 phosphorylation is critical for stabilization of both PDPK1 and the PDPK1/SRC complex via HSP90-mediated protection of PDPK1 degradation. Angiotensin II stimulates the tyrosine phosphorylation of PDPK1 in vascular smooth muscle in a calcium- and SRC-dependent manner. Phosphorylated on Tyr-9, Tyr-373 and Tyr-376 by INSR in response to insulin. Palmitate negatively regulates autophosphorylation at Ser-241 and palmitate-induced phosphorylation at Ser-529 and Ser-501 by PKC/PRKCQ negatively regulates its ability to phosphorylate PKB/AKT1. Phosphorylation at Thr-354 by MELK partially inhibits kinase activity, the inhibition is cooperatively enhanced by phosphorylation at Ser-394 and Ser-398 by MAP3K5. In terms of processing, autophosphorylated; autophosphorylation is inhibited by the apoptotic C-terminus cleavage product of PKN2. Post-translationally, monoubiquitinated in the kinase domain, deubiquitinated by USP4. In terms of tissue distribution, appears to be expressed ubiquitously. The Tyr-9 phosphorylated form is markedly increased in diseased tissue compared with normal tissue from lung, liver, colon and breast.

The protein localises to the cytoplasm. It localises to the nucleus. Its subcellular location is the cell membrane. It is found in the cell junction. The protein resides in the focal adhesion. The catalysed reaction is L-seryl-[protein] + ATP = O-phospho-L-seryl-[protein] + ADP + H(+). It carries out the reaction L-threonyl-[protein] + ATP = O-phospho-L-threonyl-[protein] + ADP + H(+). Homodimerization regulates its activity by maintaining the kinase in an autoinhibitory conformation. NPRL2 down-regulates its activity by interfering with tyrosine phosphorylation at the Tyr-9, Tyr-373 and Tyr-376 residues. The 14-3-3 protein YWHAQ acts as a negative regulator by association with the residues surrounding the Ser-241 residue. STRAP positively regulates its activity by enhancing its autophosphorylation and by stimulating its dissociation from YWHAQ. SMAD2, SMAD3, SMAD4 and SMAD7 also positively regulate its activity by stimulating its dissociation from YWHAQ. Activated by phosphorylation on Tyr-9, Tyr-373 and Tyr-376 by INSR in response to insulin. Its function is as follows. Serine/threonine kinase which acts as a master kinase, phosphorylating and activating a subgroup of the AGC family of protein kinases. Its targets include: protein kinase B (PKB/AKT1, PKB/AKT2, PKB/AKT3), p70 ribosomal protein S6 kinase (RPS6KB1), p90 ribosomal protein S6 kinase (RPS6KA1, RPS6KA2 and RPS6KA3), cyclic AMP-dependent protein kinase (PRKACA), protein kinase C (PRKCD and PRKCZ), serum and glucocorticoid-inducible kinase (SGK1, SGK2 and SGK3), p21-activated kinase-1 (PAK1), TSSK3, protein kinase PKN (PKN1 and PKN2). Plays a central role in the transduction of signals from insulin by providing the activating phosphorylation to PKB/AKT1, thus propagating the signal to downstream targets controlling cell proliferation and survival, as well as glucose and amino acid uptake and storage. Negatively regulates the TGF-beta-induced signaling by: modulating the association of SMAD3 and SMAD7 with TGF-beta receptor, phosphorylating SMAD2, SMAD3, SMAD4 and SMAD7, preventing the nuclear translocation of SMAD3 and SMAD4 and the translocation of SMAD7 from the nucleus to the cytoplasm in response to TGF-beta. Activates PPARG transcriptional activity and promotes adipocyte differentiation. Activates the NF-kappa-B pathway via phosphorylation of IKKB. The tyrosine phosphorylated form is crucial for the regulation of focal adhesions by angiotensin II. Controls proliferation, survival, and growth of developing pancreatic cells. Participates in the regulation of Ca(2+) entry and Ca(2+)-activated K(+) channels of mast cells. Essential for the motility of vascular endothelial cells (ECs) and is involved in the regulation of their chemotaxis. Plays a critical role in cardiac homeostasis by serving as a dual effector for cell survival and beta-adrenergic response. Plays an important role during thymocyte development by regulating the expression of key nutrient receptors on the surface of pre-T cells and mediating Notch-induced cell growth and proliferative responses. Provides negative feedback inhibition to toll-like receptor-mediated NF-kappa-B activation in macrophages. In terms of biological role, catalytically inactive. The protein is 3-phosphoinositide-dependent protein kinase 1 (PDPK1) of Homo sapiens (Human).